Reading from the N-terminus, the 1064-residue chain is Protein NLRC3 (1064 aa).

In terms of domain architecture, NACHT spans 138 to 459 (RVSLTIGVAG…YCFIHLSLQE (322 aa)). Position 144 to 151 (144 to 151 (GVAGVGKT)) interacts with ATP. 16 LRR repeats span residues 338–362 (LGHL…LCEL), 570–593 (LSEL…TLAG), 632–662 (LPQL…VLSG), 664–687 (DCRI…ALAR), 692–715 (NRSL…ALAD), 720–743 (NRTL…CVAE), 748–771 (NQTI…QMAD), 776–799 (NRSL…ALAE), 804–827 (NQIL…VLMR), 832–855 (NQTL…ALTQ), 860–883 (NNTL…AIAV), 888–911 (NHSL…ALGQ), 916–939 (NRTL…SVAG), 972–995 (NRTL…ALAN), 1000–1022 (NSSL…IFVA), and 1028–1051 (NHGL…MISE).

Belongs to the NLRP family. Directly interacts (via CARD) with TMEM173/STING; this interaction reduces TMEM173 trafficking to the perinuclear region in response to interferon stimulatory DNA. Also interacts, but to a lesser extent, with TBK1. Interacts with TRAF6; this interaction results in decreased TRAF6 'Lys-63'-linked polyubiquitination, but leaves 'Lys-48'-linked chains unchanged, promoting TRAF6 protein degradation. Interacts with PIK3R1/PIK3R2; this interaction disrupts the association between PIK3R1/PIK3R2 and the p110 catalytic subunit PIK3CA/PIK3CB/PIK3CD and reduces PIK3R1/PIK3R2 activation. Weakly interacts with PYCARD/ASC. Interacts with CASP1 and CASP5. Expressed in bone marrow-derived macrophages.

The protein localises to the cytoplasm. Its function is as follows. Negative regulator of the innate immune response. Attenuates signaling pathways activated by Toll-like receptors (TLRs) and the DNA sensor STING/TMEM173 in response to pathogen-associated molecular patterns, such as intracellular poly(dA:dT), but not poly(I:C), or in response to DNA virus infection, including that of Herpes simplex virus 1 (HSV1). May affect TLR4 signaling by acting at the level of TRAF6 ubiquitination, decreasing the activating 'Lys-63'-linked ubiquitination and leaving unchanged the degradative 'Lys-48'-linked ubiquitination. Inhibits the PI3K-AKT-mTOR pathway possibly by directly interacting with the posphatidylinositol 3-kinase regulatory subunit p85 (PIK3R1/PIK3R2) and disrupting the association between PIK3R1/PIK3R2 and the catalytic subunit p110 (PIK3CA/PIK3CB/PIK3CD) and reducing PIK3R1/PIK3R2 activation. Via its regulation of the PI3K-AKT-mTOR pathway, controls cell proliferation, predominantly in intestinal epithelial cells. May also affect NOD1- or NOD2-mediated NF-kappa-B activation. Might also affect the inflammatory response by preventing NLRP3 inflammasome formation, CASP1 cleavage and IL1B maturation. The sequence is that of Protein NLRC3 (Nlrc3) from Mus musculus (Mouse).